The primary structure comprises 263 residues: uncharacterized protein (263 aa).

Gly-17–Ser-41 is an NAD(+) binding site. Position 147 (Ser-147) interacts with substrate. Tyr-160 (proton acceptor) is an active-site residue. Lys-164 contacts NAD(+).

It belongs to the short-chain dehydrogenases/reductases (SDR) family.

This is an uncharacterized protein from Mycobacterium tuberculosis (strain CDC 1551 / Oshkosh).